The following is a 274-amino-acid chain: Glutamate--cysteine ligase regulatory subunit (274 aa).

A Phosphoserine modification is found at Ser59. N6-acetyllysine is present on Lys263.

The protein belongs to the aldo/keto reductase family. Glutamate--cysteine ligase light chain subfamily. In terms of assembly, heterodimer of a catalytic heavy chain and a regulatory light chain.

The protein operates within sulfur metabolism; glutathione biosynthesis; glutathione from L-cysteine and L-glutamate: step 1/2. The polypeptide is Glutamate--cysteine ligase regulatory subunit (Gclm) (Mus musculus (Mouse)).